The sequence spans 369 residues: Flagellar P-ring protein (369 aa).

The N-terminal stretch at 1–22 is a signal peptide; that stretch reads MLNFKHLMAAALLLSTSLGVQA.

Belongs to the FlgI family. As to quaternary structure, the basal body constitutes a major portion of the flagellar organelle and consists of four rings (L,P,S, and M) mounted on a central rod.

It is found in the periplasm. The protein localises to the bacterial flagellum basal body. Functionally, assembles around the rod to form the L-ring and probably protects the motor/basal body from shearing forces during rotation. This Pseudomonas fluorescens (strain ATCC BAA-477 / NRRL B-23932 / Pf-5) protein is Flagellar P-ring protein.